Here is a 99-residue protein sequence, read N- to C-terminus: Large ribosomal subunit protein eL30 (99 aa).

Belongs to the eukaryotic ribosomal protein eL30 family. Part of the 50S ribosomal subunit.

This Pyrococcus furiosus (strain ATCC 43587 / DSM 3638 / JCM 8422 / Vc1) protein is Large ribosomal subunit protein eL30.